Here is a 149-residue protein sequence, read N- to C-terminus: Nucleoside diphosphate kinase (149 aa).

ATP is bound by residues lysine 9, phenylalanine 57, arginine 85, threonine 91, arginine 102, and asparagine 112. Histidine 115 serves as the catalytic Pros-phosphohistidine intermediate.

It belongs to the NDK family. Homotetramer. Mg(2+) serves as cofactor.

Its subcellular location is the cytoplasm. It carries out the reaction a 2'-deoxyribonucleoside 5'-diphosphate + ATP = a 2'-deoxyribonucleoside 5'-triphosphate + ADP. The catalysed reaction is a ribonucleoside 5'-diphosphate + ATP = a ribonucleoside 5'-triphosphate + ADP. In terms of biological role, major role in the synthesis of nucleoside triphosphates other than ATP. The ATP gamma phosphate is transferred to the NDP beta phosphate via a ping-pong mechanism, using a phosphorylated active-site intermediate. This is Nucleoside diphosphate kinase from Cyanothece sp. (strain PCC 7425 / ATCC 29141).